Consider the following 402-residue polypeptide: MTGIIHSLLDTDLYKFTMLQVVLHQFPQTHSLYEFRCRNASTVYPLADIREDLEAELDALCQLRFTHDELGYLRSLRFIKSDFVDYLELFQLQRRFVEIGTDDKDRLNIRIEGPMIQAMFFEIFILAIVNELYFRRLETPAVIEEGERRLQAKAARLKEIAAAQNPDEPPFLISDFGTRRRYKLAWQEHVIRTLLEAAPGIVRGTSNVFLAKKLGITPIGTMAHEFLQAFQALDVRLRNFQKAALESWVHEYRGDLGVALTDVVGMDAFLRDFDLYFAKLFDGLRHDSGDPYVWGDKAYAHYQKLKIDSRTKMLTFSDGLDIERSWALHQYFKDRFKTGFGIGTNLTNDMGHTPLNIVLKLVECNGQSVAKLSDSPGKTMTNNSTFLAYLRQVFDVPEPETP.

H224 is modified (phosphohistidine; by autocatalysis).

This sequence belongs to the NAPRTase family. Transiently phosphorylated on a His residue during the reaction cycle. Phosphorylation strongly increases the affinity for substrates and increases the rate of nicotinate D-ribonucleotide production. Dephosphorylation regenerates the low-affinity form of the enzyme, leading to product release.

It catalyses the reaction nicotinate + 5-phospho-alpha-D-ribose 1-diphosphate + ATP + H2O = nicotinate beta-D-ribonucleotide + ADP + phosphate + diphosphate. It functions in the pathway cofactor biosynthesis; NAD(+) biosynthesis; nicotinate D-ribonucleotide from nicotinate: step 1/1. Its function is as follows. Catalyzes the synthesis of beta-nicotinate D-ribonucleotide from nicotinate and 5-phospho-D-ribose 1-phosphate at the expense of ATP. This chain is Nicotinate phosphoribosyltransferase, found in Neisseria meningitidis serogroup B (strain ATCC BAA-335 / MC58).